Consider the following 373-residue polypeptide: Queuine tRNA-ribosyltransferase (373 aa).

Asp91 serves as the catalytic Proton acceptor. Substrate contacts are provided by residues 91–95 (DSGGF), Asp145, and Gln187. Positions 245–251 (GVGTPED) are RNA binding. Residue Asp264 is the Nucleophile of the active site. Positions 269 to 273 (TRNAR) are RNA binding; important for wobble base 34 recognition. Residues Cys302, Cys304, Cys307, and His333 each coordinate Zn(2+).

It belongs to the queuine tRNA-ribosyltransferase family. As to quaternary structure, homodimer. Within each dimer, one monomer is responsible for RNA recognition and catalysis, while the other monomer binds to the replacement base PreQ1. Zn(2+) is required as a cofactor.

The catalysed reaction is 7-aminomethyl-7-carbaguanine + guanosine(34) in tRNA = 7-aminomethyl-7-carbaguanosine(34) in tRNA + guanine. It functions in the pathway tRNA modification; tRNA-queuosine biosynthesis. Catalyzes the base-exchange of a guanine (G) residue with the queuine precursor 7-aminomethyl-7-deazaguanine (PreQ1) at position 34 (anticodon wobble position) in tRNAs with GU(N) anticodons (tRNA-Asp, -Asn, -His and -Tyr). Catalysis occurs through a double-displacement mechanism. The nucleophile active site attacks the C1' of nucleotide 34 to detach the guanine base from the RNA, forming a covalent enzyme-RNA intermediate. The proton acceptor active site deprotonates the incoming PreQ1, allowing a nucleophilic attack on the C1' of the ribose to form the product. After dissociation, two additional enzymatic reactions on the tRNA convert PreQ1 to queuine (Q), resulting in the hypermodified nucleoside queuosine (7-(((4,5-cis-dihydroxy-2-cyclopenten-1-yl)amino)methyl)-7-deazaguanosine). In Syntrophobacter fumaroxidans (strain DSM 10017 / MPOB), this protein is Queuine tRNA-ribosyltransferase.